Reading from the N-terminus, the 239-residue chain is Glandular kallikrein, prostatic (239 aa).

In terms of domain architecture, Peptidase S1 spans valine 1–alanine 236. Intrachain disulfides connect cysteine 7–cysteine 151, cysteine 26–cysteine 42, cysteine 128–cysteine 197, cysteine 162–cysteine 176, and cysteine 187–cysteine 212. The active-site Charge relay system is histidine 41. N-linked (GlcNAc...) asparagine glycosylation occurs at asparagine 78. Aspartate 96 functions as the Charge relay system in the catalytic mechanism. The N-linked (GlcNAc...) asparagine glycan is linked to asparagine 169. Serine 191 acts as the Charge relay system in catalysis.

Belongs to the peptidase S1 family. Kallikrein subfamily.

The enzyme catalyses Preferential cleavage of Arg-|-Xaa bonds in small molecule substrates. Highly selective action to release kallidin (lysyl-bradykinin) from kininogen involves hydrolysis of Met-|-Xaa or Leu-|-Xaa.. Glandular kallikreins cleave Met-Lys and Arg-Ser bonds in kininogen to release Lys-bradykinin. This chain is Glandular kallikrein, prostatic, found in Cavia porcellus (Guinea pig).